Reading from the N-terminus, the 167-residue chain is NAD(P)H-quinone oxidoreductase subunit I, chloroplastic (167 aa).

4Fe-4S ferredoxin-type domains follow at residues 55–84 (GRIH…VDWK) and 95–124 (LNYS…MTEE). Positions 64, 67, 70, 74, 104, 107, 110, and 114 each coordinate [4Fe-4S] cluster.

Belongs to the complex I 23 kDa subunit family. In terms of assembly, NDH is composed of at least 16 different subunits, 5 of which are encoded in the nucleus. It depends on [4Fe-4S] cluster as a cofactor.

The protein localises to the plastid. It is found in the chloroplast thylakoid membrane. It catalyses the reaction a plastoquinone + NADH + (n+1) H(+)(in) = a plastoquinol + NAD(+) + n H(+)(out). It carries out the reaction a plastoquinone + NADPH + (n+1) H(+)(in) = a plastoquinol + NADP(+) + n H(+)(out). NDH shuttles electrons from NAD(P)H:plastoquinone, via FMN and iron-sulfur (Fe-S) centers, to quinones in the photosynthetic chain and possibly in a chloroplast respiratory chain. The immediate electron acceptor for the enzyme in this species is believed to be plastoquinone. Couples the redox reaction to proton translocation, and thus conserves the redox energy in a proton gradient. In Aethionema cordifolium (Lebanon stonecress), this protein is NAD(P)H-quinone oxidoreductase subunit I, chloroplastic.